The sequence spans 269 residues: Intron-associated endonuclease 3 (269 aa).

Its function is as follows. This endonuclease is specific to the nrdB gene splice junction and is involved in intron homing. This Enterobacteria phage RB3 (Bacteriophage RB3) protein is Intron-associated endonuclease 3 (ITEVIIIR).